A 272-amino-acid polypeptide reads, in one-letter code: Pyridoxal phosphate phosphatase YbhA (272 aa).

The Nucleophile role is filled by Asp-9. Position 9 (Asp-9) interacts with Mg(2+). Leu-10 is a binding site for phosphate. Asp-11 contributes to the Mg(2+) binding site. Residues 43–44 and Lys-200 each bind phosphate; that span reads TG. Position 223 (Asp-223) interacts with Mg(2+). Residue Asn-226 participates in phosphate binding.

This sequence belongs to the HAD-like hydrolase superfamily. CbbY/CbbZ/Gph/YieH family. Requires Mg(2+) as cofactor. Mn(2+) is required as a cofactor. The cofactor is Co(2+). It depends on Zn(2+) as a cofactor.

It carries out the reaction pyridoxal 5'-phosphate + H2O = pyridoxal + phosphate. Its function is as follows. Catalyzes the dephosphorylation of pyridoxal-phosphate (PLP). Can also hydrolyze erythrose-4-phosphate (Ery4P) and fructose-1,6-bis-phosphate (Fru1,6bisP). The polypeptide is Pyridoxal phosphate phosphatase YbhA (ybhA) (Escherichia coli (strain K12)).